We begin with the raw amino-acid sequence, 299 residues long: Probable alpha-L-glutamate ligase 2 (299 aa).

Residues Met104–Glu287 form the ATP-grasp domain. ATP-binding positions include Lys141, Glu178–Tyr179, Asp187, and Arg211–Asn213. Residues Asp248, Glu260, and Asn262 each contribute to the Mg(2+) site. 3 residues coordinate Mn(2+): Asp248, Glu260, and Asn262.

Belongs to the RimK family. Requires Mg(2+) as cofactor. Mn(2+) is required as a cofactor.

The polypeptide is Probable alpha-L-glutamate ligase 2 (Shewanella sp. (strain MR-4)).